We begin with the raw amino-acid sequence, 335 residues long: Magnesium-protoporphyrin IX monomethyl ester [oxidative] cyclase (335 aa).

The protein belongs to the AcsF family. It depends on Fe cation as a cofactor.

Its subcellular location is the plastid. The protein localises to the chloroplast. It catalyses the reaction Mg-protoporphyrin IX 13-monomethyl ester + 3 NADPH + 3 O2 + 2 H(+) = 3,8-divinyl protochlorophyllide a + 3 NADP(+) + 5 H2O. Its pathway is porphyrin-containing compound metabolism; chlorophyll biosynthesis (light-independent). Functionally, catalyzes the formation of the isocyclic ring in chlorophyll biosynthesis. Mediates the cyclase reaction, which results in the formation of divinylprotochlorophyllide (Pchlide) characteristic of all chlorophylls from magnesium-protoporphyrin IX 13-monomethyl ester (MgPMME). This chain is Magnesium-protoporphyrin IX monomethyl ester [oxidative] cyclase, found in Cyanidioschyzon merolae (strain NIES-3377 / 10D) (Unicellular red alga).